The following is a 504-amino-acid chain: L-amino-acid oxidase (504 aa).

The signal sequence occupies residues 1–18 (MNIFFMFSLLFLATLGSC). A disulfide bridge links C28 with C191. Residues 61–62 (MS), 81–82 (EA), R89, and 105–108 (GPMR) contribute to the FAD site. R108 lines the substrate pocket. N-linked (GlcNAc...) asparagine glycosylation occurs at N190. Substrate is bound at residue H241. V279 serves as a coordination point for FAD. C349 and C430 are oxidised to a cystine. N379 carries N-linked (GlcNAc...) asparagine glycosylation. A substrate-binding site is contributed by Y390. FAD-binding positions include E475 and 482 to 487 (GWIDST). Substrate is bound at residue 482 to 483 (GW).

It belongs to the flavin monoamine oxidase family. FIG1 subfamily. As to quaternary structure, homodimer; non-covalently linked. The cofactor is FAD. As to expression, expressed by the venom gland.

The protein resides in the secreted. The enzyme catalyses an L-alpha-amino acid + O2 + H2O = a 2-oxocarboxylate + H2O2 + NH4(+). Functionally, catalyzes an oxidative deamination of predominantly hydrophobic and aromatic L-amino acids, thus producing hydrogen peroxide that may contribute to the diverse toxic effects of this enzyme. Exhibits diverse biological activities, such as hemorrhage, hemolysis, edema, apoptosis of vascular endothelial cells or tumor cell lines, antibacterial and antiparasitic activities, as well as regulation of platelet aggregation. Its effect on platelets is controversial, since it either induces aggregation or inhibits agonist-induced aggregation. These different effects are probably due to different experimental conditions. This Echis ocellatus (Ocellated saw-scaled viper) protein is L-amino-acid oxidase.